A 1823-amino-acid chain; its full sequence is Bromodomain-containing protein DDB_G0280777 (1823 aa).

Disordered stretches follow at residues 44-83 (DNNN…EEDE) and 200-281 (LKQT…RTTS). A compositionally biased stretch (basic and acidic residues) spans 65–77 (SNKEEEKEEKEEK). Residues 210-224 (KRRNQQHQNLLKKQK) are compositionally biased toward basic residues. Positions 225–250 (IQKEKEEREQKEKEQKEKEQKEKEEQ) are enriched in basic and acidic residues. Residues 251-262 (QQQLFLLQQQQQ) are compositionally biased toward low complexity. One can recognise a Bromo domain in the interval 306–413 (EAQEEMYDQL…KKSKDLMKNV (108 aa)). Disordered regions lie at residues 429–654 (ENKN…EEQT), 753–781 (NCNN…NNSL), 855–886 (INDN…NNKP), 949–993 (NSSK…DEDF), 1055–1079 (LPNN…PPPS), 1190–1386 (IDPK…IQAS), 1453–1477 (QLQQ…QTPQ), and 1679–1823 (QQQQ…QKKQ). Low complexity-rich tracts occupy residues 432–486 (NNNN…NTPL), 494–511 (CSPS…TPQS), 520–555 (QQQQ…ISPR), and 570–579 (SSSSLSSSSL). Residues 580-590 (ALNSQNENGVN) show a composition bias toward polar residues. Over residues 601–614 (MESEESTNVKKEEN) the composition is skewed to basic and acidic residues. The segment covering 631-643 (EGEEQQEQEDEEQ) has biased composition (acidic residues). Low complexity-rich tracts occupy residues 753-779 (NCNN…NNNN), 863-884 (NNNN…NNNN), 949-958 (NSSKSNNNSN), 1055-1071 (LPNN…TTQL), and 1205-1378 (NNNN…NNNN). A compositionally biased stretch (low complexity) spans 1679-1705 (QQQQPQQQQQQPQQQPQQQPQQQQQPQ). Composition is skewed to basic and acidic residues over residues 1716–1737 (PKEK…EKDR) and 1744–1755 (KTESKKESKKSL). 2 stretches are compositionally biased toward low complexity: residues 1756 to 1767 (NDSSNSDINTSV) and 1789 to 1806 (SSKQ…TQDS). The span at 1813–1823 (KKKRGRPQKKQ) shows a compositional bias: basic residues.

This chain is Bromodomain-containing protein DDB_G0280777, found in Dictyostelium discoideum (Social amoeba).